A 341-amino-acid polypeptide reads, in one-letter code: THO complex subunit 6 homolog (341 aa).

7 WD repeats span residues arginine 22–alanine 61, alanine 74–glutamate 112, leucine 124–alanine 163, glycine 166–threonine 205, serine 215–valine 254, proline 256–valine 293, and glycine 295–leucine 339. Serine 180 carries the phosphoserine modification.

It belongs to the WD repeat THOC6 family. As to quaternary structure, component of the THO subcomplex, which is composed of THOC1, THOC2, THOC3, THOC5, THOC6 and THOC7. The THO subcomplex interacts with DDX39B to form the THO-DDX39B complex which multimerizes into a 28-subunit tetrameric assembly. Component of the transcription/export (TREX) complex at least composed of ALYREF/THOC4, DDX39B, SARNP/CIP29, CHTOP and the THO subcomplex; in the complex interacts with THOC5; together with THOC5 and THOC7, plays a key structural role in the oligomerization of the THO-DDX39B complex. TREX seems to have a dynamic structure involving ATP-dependent remodeling.

Its subcellular location is the nucleus. It localises to the nucleus speckle. Component of the THO subcomplex of the TREX complex which is thought to couple mRNA transcription, processing and nuclear export, and which specifically associates with spliced mRNA and not with unspliced pre-mRNA. Plays a key structural role in the oligomerization of the THO-DDX39B complex. TREX is recruited to spliced mRNAs by a transcription-independent mechanism, binds to mRNA upstream of the exon-junction complex (EJC) and is recruited in a splicing- and cap-dependent manner to a region near the 5' end of the mRNA where it functions in mRNA export to the cytoplasm via the TAP/NXF1 pathway. Plays a role in apoptosis negative control involved in brain development. The sequence is that of THO complex subunit 6 homolog (Thoc6) from Rattus norvegicus (Rat).